A 297-amino-acid polypeptide reads, in one-letter code: Tyrosine recombinase XerD (297 aa).

The Core-binding (CB) domain maps to 1–87 (MLEYAIEDFF…SIRSFHQFLI (87 aa)). The 184-residue stretch at 108-291 (KLPDILSQDE…TKARLKDMYQ (184 aa)) folds into the Tyr recombinase domain. Active-site residues include R147, K171, H243, R246, and H269. Y278 serves as the catalytic O-(3'-phospho-DNA)-tyrosine intermediate.

It belongs to the 'phage' integrase family. XerD subfamily. Forms a cyclic heterotetrameric complex composed of two molecules of XerC and two molecules of XerD.

It localises to the cytoplasm. Site-specific tyrosine recombinase, which acts by catalyzing the cutting and rejoining of the recombining DNA molecules. The XerC-XerD complex is essential to convert dimers of the bacterial chromosome into monomers to permit their segregation at cell division. It also contributes to the segregational stability of plasmids. The chain is Tyrosine recombinase XerD from Oceanobacillus iheyensis (strain DSM 14371 / CIP 107618 / JCM 11309 / KCTC 3954 / HTE831).